We begin with the raw amino-acid sequence, 118 residues long: uncharacterized protein (118 aa).

To M.jannaschii MJ0310 and MJ1340.

This is an uncharacterized protein from Methanocaldococcus jannaschii (strain ATCC 43067 / DSM 2661 / JAL-1 / JCM 10045 / NBRC 100440) (Methanococcus jannaschii).